Here is a 312-residue protein sequence, read N- to C-terminus: 2-dehydropantoate 2-reductase (312 aa).

Residues 7 to 12 (GAGAMG), Asn-105, and Ala-131 each bind NADP(+). Residue Asn-105 participates in substrate binding. Catalysis depends on Lys-187, which acts as the Proton donor. Residues Asn-191, Asn-195, and Ser-260 each coordinate substrate. Glu-273 contributes to the NADP(+) binding site.

Belongs to the ketopantoate reductase family.

Its subcellular location is the cytoplasm. It catalyses the reaction (R)-pantoate + NADP(+) = 2-dehydropantoate + NADPH + H(+). The protein operates within cofactor biosynthesis; (R)-pantothenate biosynthesis; (R)-pantoate from 3-methyl-2-oxobutanoate: step 2/2. Functionally, catalyzes the NADPH-dependent reduction of ketopantoate into pantoic acid. This chain is 2-dehydropantoate 2-reductase, found in Lactococcus lactis subsp. lactis (strain IL1403) (Streptococcus lactis).